A 437-amino-acid polypeptide reads, in one-letter code: Protein arginine methyltransferase NDUFAF7 homolog, mitochondrial (437 aa).

Positions 21–49 (RPNLGATGTPKMEPPKEQPEASSKAESGH) are disordered.

The protein belongs to the NDUFAF7 family.

It is found in the mitochondrion. It catalyses the reaction L-arginyl-[protein] + 2 S-adenosyl-L-methionine = N(omega),N(omega)'-dimethyl-L-arginyl-[protein] + 2 S-adenosyl-L-homocysteine + 2 H(+). Functionally, arginine methyltransferase involved in the assembly or stability of mitochondrial NADH:ubiquinone oxidoreductase complex (complex I). The polypeptide is Protein arginine methyltransferase NDUFAF7 homolog, mitochondrial (Drosophila melanogaster (Fruit fly)).